A 156-amino-acid chain; its full sequence is ATP synthase subunit b (156 aa).

The chain crosses the membrane as a helical span at residues 7-27 (LVAQMVVFFILWWVVAKFIWP).

Belongs to the ATPase B chain family. As to quaternary structure, F-type ATPases have 2 components, F(1) - the catalytic core - and F(0) - the membrane proton channel. F(1) has five subunits: alpha(3), beta(3), gamma(1), delta(1), epsilon(1). F(0) has three main subunits: a(1), b(2) and c(10-14). The alpha and beta chains form an alternating ring which encloses part of the gamma chain. F(1) is attached to F(0) by a central stalk formed by the gamma and epsilon chains, while a peripheral stalk is formed by the delta and b chains.

The protein localises to the cell inner membrane. In terms of biological role, f(1)F(0) ATP synthase produces ATP from ADP in the presence of a proton or sodium gradient. F-type ATPases consist of two structural domains, F(1) containing the extramembraneous catalytic core and F(0) containing the membrane proton channel, linked together by a central stalk and a peripheral stalk. During catalysis, ATP synthesis in the catalytic domain of F(1) is coupled via a rotary mechanism of the central stalk subunits to proton translocation. Component of the F(0) channel, it forms part of the peripheral stalk, linking F(1) to F(0). The protein is ATP synthase subunit b of Ralstonia pickettii (strain 12J).